The chain runs to 312 residues: Olfactory receptor 51I2 (312 aa).

The Extracellular segment spans residues 1 to 25 (MGLFNVTHPAFFLLTGIPGLESSHS). Asn-5 carries N-linked (GlcNAc...) asparagine glycosylation. Residues 26–46 (WLSGPLCVMYAVALGGNTVIL) traverse the membrane as a helical segment. Over 47–54 (QAVRVEPS) the chain is Cytoplasmic. A helical transmembrane segment spans residues 55–75 (LHEPMYYFLSMLSFSDVAISM). Over 76–99 (ATLPTVLRTFCLNARNITFDACLI) the chain is Extracellular. Cys-97 and Cys-189 are oxidised to a cystine. The chain crosses the membrane as a helical span at residues 100–120 (QMFLIHFFSMMESGILLAMSF). The Cytoplasmic portion of the chain corresponds to 121 to 139 (DRYVAICDPLRYATVLTTE). A helical transmembrane segment spans residues 140-160 (VIAAMGLGAAARSFITLFPLP). Topologically, residues 161-196 (FLIKRLPICRSNVLSHSYCLHPDMMRLACADISINS) are extracellular. A helical membrane pass occupies residues 197 to 217 (IYGLFVLVSTFGMDLFFIFLS). The Cytoplasmic portion of the chain corresponds to 218 to 237 (YVLILRSVMATASREERLKA). Residues 238 to 258 (LNTCVSHILAVLAFYVPMIGV) form a helical membrane-spanning segment. Residues 259–273 (STVHRFGKHVPCYIH) are Extracellular-facing. Residues 274-294 (VLMSNVYLFVPPVLNPLIYSA) form a helical membrane-spanning segment. Over 295–312 (KTKEIRRAIFRMFHHIKI) the chain is Cytoplasmic.

It belongs to the G-protein coupled receptor 1 family.

Its subcellular location is the cell membrane. Odorant receptor. This chain is Olfactory receptor 51I2 (OR51I2), found in Homo sapiens (Human).